A 211-amino-acid chain; its full sequence is LexA repressor (211 aa).

Residues 31–51 constitute a DNA-binding region (H-T-H motif); sequence RAEISKELGFRSPNAAEEHLK. Residues S127 and K164 each act as for autocatalytic cleavage activity in the active site.

Belongs to the peptidase S24 family. In terms of assembly, homodimer.

The catalysed reaction is Hydrolysis of Ala-|-Gly bond in repressor LexA.. Functionally, represses a number of genes involved in the response to DNA damage (SOS response), including recA and lexA. In the presence of single-stranded DNA, RecA interacts with LexA causing an autocatalytic cleavage which disrupts the DNA-binding part of LexA, leading to derepression of the SOS regulon and eventually DNA repair. This Pasteurella multocida (strain Pm70) protein is LexA repressor.